Consider the following 190-residue polypeptide: Potassium-transporting ATPase KdpC subunit (190 aa).

A helical transmembrane segment spans residues threonine 10 to glycine 30.

Belongs to the KdpC family. As to quaternary structure, the system is composed of three essential subunits: KdpA, KdpB and KdpC.

Its subcellular location is the cell inner membrane. Its function is as follows. Part of the high-affinity ATP-driven potassium transport (or Kdp) system, which catalyzes the hydrolysis of ATP coupled with the electrogenic transport of potassium into the cytoplasm. This subunit acts as a catalytic chaperone that increases the ATP-binding affinity of the ATP-hydrolyzing subunit KdpB by the formation of a transient KdpB/KdpC/ATP ternary complex. The sequence is that of Potassium-transporting ATPase KdpC subunit from Escherichia coli O157:H7.